A 146-amino-acid polypeptide reads, in one-letter code: Kappa-casein (146 aa).

O-linked (GalNAc...) threonine glycosylation is found at Thr107 and Thr112. Position 125 is a phosphoserine; alternate (Ser125). Residue Ser125 is glycosylated (O-linked (GalNAc...) serine; alternate). Thr142 carries an O-linked (GalNAc...) threonine glycan. The residue at position 143 (Ser143) is a Phosphoserine.

The protein belongs to the kappa-casein family. In terms of tissue distribution, mammary gland specific. Secreted in milk.

It is found in the secreted. Its function is as follows. Kappa-casein stabilizes micelle formation, preventing casein precipitation in milk. The polypeptide is Kappa-casein (CSN3) (Tapirus indicus (Asiatic tapir)).